A 64-amino-acid chain; its full sequence is SPbeta prophage-derived uncharacterized protein YonP (64 aa).

The sequence is that of SPbeta prophage-derived uncharacterized protein YonP (yonP) from Bacillus subtilis (strain 168).